The chain runs to 184 residues: Luciferin-binding protein (184 aa).

4 EF-hand domains span residues 10–45, 46–81, 98–133, and 134–169; these read YHLR…IAKI, AKLS…EEAA, MAVI…VGPD, and ITDD…FLFG. The Ca(2+) site is built by Asp111, Asp113, Asp115, Tyr117, Glu122, Asp147, Asn149, Asn151, Gln153, and Glu158.

This Ca(2+)-dependent protein binds to luciferin. The luciferin of LBP is capable of reacting with luciferase and O(2) only when calcium is bound. This chain is Luciferin-binding protein, found in Renilla reniformis (Sea pansy).